The chain runs to 125 residues: Profilin-P (125 aa).

Serine 2 carries the N-acetylserine modification.

This sequence belongs to the profilin family. In terms of assembly, occurs in many kinds of cells as a complex with monomeric actin in a 1:1 ratio.

It is found in the cytoplasm. The protein resides in the cytoskeleton. Its function is as follows. Binds to actin and affects the structure of the cytoskeleton. At high concentrations, profilin prevents the polymerization of actin, whereas it enhances it at low concentrations. By binding to PIP2, it inhibits the formation of IP3 and DG. This chain is Profilin-P (PROP), found in Physarum polycephalum (Slime mold).